The chain runs to 161 residues: Protein-export protein SecB (161 aa).

It belongs to the SecB family. Homotetramer, a dimer of dimers. One homotetramer interacts with 1 SecA dimer.

It localises to the cytoplasm. Functionally, one of the proteins required for the normal export of preproteins out of the cell cytoplasm. It is a molecular chaperone that binds to a subset of precursor proteins, maintaining them in a translocation-competent state. It also specifically binds to its receptor SecA. This chain is Protein-export protein SecB, found in Rhodopseudomonas palustris (strain BisA53).